The sequence spans 716 residues: Mitochondrial Rho GTPase 1 (716 aa).

Topologically, residues 1–692 (MSPDAIRVVV…VSVDQDDIKH (692 aa)) are cytoplasmic. The 222-residue stretch at 3–224 (PDAIRVVVCG…FYLCQRAVTH (222 aa)) folds into the Miro 1 domain. The interval 58-99 (NDQDHHHHHQSSPSTMKNKRKHNNKRERERERESSINNVQPN) is disordered. GTP is bound by residues 84–91 (ERERERES), 113–115 (DTS), and 167–170 (NKSD). The region spanning 240-275 (GAIKPLKRIFWLSDTDQDGYLNFEELSELHKKCFGI) is the EF-hand 1 domain. Ca(2+) is bound by residues aspartate 253, aspartate 255, aspartate 257, tyrosine 259, and glutamate 264. The tract at residues 303-327 (TQTPPQQQHLATSAGTPNGTTTTTS) is disordered. Residues 388–423 (TGYKFFVDLFIKFDKDNDGGLNEDELNTLFRSTPGI) form the EF-hand 2 domain. Ca(2+) contacts are provided by aspartate 401, aspartate 403, aspartate 405, and glutamate 412. The Miro 2 domain occupies 505–671 (RNVFNCFIVG…FIQLVDAAKT (167 aa)). GTP-binding positions include 514–521 (GAPKAGKS), 550–554 (ELRGG), and 620–623 (LKAD). The helical; Anchor for type IV membrane protein transmembrane segment at 693 to 713 (IIMTGAAIAVVGLVSIWVLNS) threads the bilayer. Topologically, residues 714-716 (LRR) are mitochondrial intermembrane.

Belongs to the mitochondrial Rho GTPase family.

The protein localises to the mitochondrion outer membrane. Functionally, mitochondrial GTPase involved in mitochondrial trafficking. Probably involved in control of anterograde transport of mitochondria and their subcellular distribution. The sequence is that of Mitochondrial Rho GTPase 1 (GEM1) from Candida albicans (strain SC5314 / ATCC MYA-2876) (Yeast).